Consider the following 343-residue polypeptide: Protein RecA (343 aa).

Gly64–Thr71 contributes to the ATP binding site.

The protein belongs to the RecA family.

Its subcellular location is the cytoplasm. Its function is as follows. Can catalyze the hydrolysis of ATP in the presence of single-stranded DNA, the ATP-dependent uptake of single-stranded DNA by duplex DNA, and the ATP-dependent hybridization of homologous single-stranded DNAs. It interacts with LexA causing its activation and leading to its autocatalytic cleavage. The protein is Protein RecA of Bacillus mycoides (strain KBAB4) (Bacillus weihenstephanensis).